The primary structure comprises 144 residues: Probable calcium-binding protein CML31 (144 aa).

EF-hand domains lie at 1–31, 32–67, 72–107, and 108–143; these read MAEIFESVDKNKDGKILWDEFAEAIRVFSPQ, ITSEEIDKMFIVLDVDGDGQIDDVEFASCLMVNGGG, EEEVVMKEAFDLYDMDGDGKISASEIHVVLKRLGEK, and HTMEDCVVMVQTVDKDSDGFVNFEEFKIMMNSNKES. Ca(2+) contacts are provided by Asp-45, Asp-47, Asp-49, Gln-51, Glu-56, Asp-85, Asp-87, Asp-89, Lys-91, Glu-96, Asp-121, Asp-123, Asp-125, and Glu-132.

Potential calcium sensor. In Arabidopsis thaliana (Mouse-ear cress), this protein is Probable calcium-binding protein CML31 (CML31).